The primary structure comprises 424 residues: Glutamyl-tRNA reductase (424 aa).

Substrate is bound by residues threonine 49–arginine 52, serine 105, glutamate 110–glutamine 112, and glutamine 116. Cysteine 50 serves as the catalytic Nucleophile. Glycine 185–alanine 190 serves as a coordination point for NADP(+).

This sequence belongs to the glutamyl-tRNA reductase family. In terms of assembly, homodimer.

The catalysed reaction is (S)-4-amino-5-oxopentanoate + tRNA(Glu) + NADP(+) = L-glutamyl-tRNA(Glu) + NADPH + H(+). Its pathway is porphyrin-containing compound metabolism; protoporphyrin-IX biosynthesis; 5-aminolevulinate from L-glutamyl-tRNA(Glu): step 1/2. Catalyzes the NADPH-dependent reduction of glutamyl-tRNA(Glu) to glutamate 1-semialdehyde (GSA). The sequence is that of Glutamyl-tRNA reductase from Legionella pneumophila (strain Paris).